Consider the following 329-residue polypeptide: 4-hydroxy-3-methylbut-2-enyl diphosphate reductase 1 (329 aa).

Cys-29 is a [4Fe-4S] cluster binding site. Residues His-58 and His-95 each coordinate (2E)-4-hydroxy-3-methylbut-2-enyl diphosphate. Dimethylallyl diphosphate contacts are provided by His-58 and His-95. Residues His-58 and His-95 each contribute to the isopentenyl diphosphate site. Cys-117 contributes to the [4Fe-4S] cluster binding site. His-145 contacts (2E)-4-hydroxy-3-methylbut-2-enyl diphosphate. Dimethylallyl diphosphate is bound at residue His-145. His-145 serves as a coordination point for isopentenyl diphosphate. Glu-147 serves as the catalytic Proton donor. Thr-185 provides a ligand contact to (2E)-4-hydroxy-3-methylbut-2-enyl diphosphate. Residue Cys-215 participates in [4Fe-4S] cluster binding. The (2E)-4-hydroxy-3-methylbut-2-enyl diphosphate site is built by Ser-243, Ser-244, Asn-245, and Ser-287. Residues Ser-243, Ser-244, Asn-245, and Ser-287 each contribute to the dimethylallyl diphosphate site. Ser-243, Ser-244, Asn-245, and Ser-287 together coordinate isopentenyl diphosphate.

The protein belongs to the IspH family. It depends on [4Fe-4S] cluster as a cofactor.

The catalysed reaction is isopentenyl diphosphate + 2 oxidized [2Fe-2S]-[ferredoxin] + H2O = (2E)-4-hydroxy-3-methylbut-2-enyl diphosphate + 2 reduced [2Fe-2S]-[ferredoxin] + 2 H(+). It catalyses the reaction dimethylallyl diphosphate + 2 oxidized [2Fe-2S]-[ferredoxin] + H2O = (2E)-4-hydroxy-3-methylbut-2-enyl diphosphate + 2 reduced [2Fe-2S]-[ferredoxin] + 2 H(+). Its pathway is isoprenoid biosynthesis; dimethylallyl diphosphate biosynthesis; dimethylallyl diphosphate from (2E)-4-hydroxy-3-methylbutenyl diphosphate: step 1/1. It participates in isoprenoid biosynthesis; isopentenyl diphosphate biosynthesis via DXP pathway; isopentenyl diphosphate from 1-deoxy-D-xylulose 5-phosphate: step 6/6. Catalyzes the conversion of 1-hydroxy-2-methyl-2-(E)-butenyl 4-diphosphate (HMBPP) into a mixture of isopentenyl diphosphate (IPP) and dimethylallyl diphosphate (DMAPP). Acts in the terminal step of the DOXP/MEP pathway for isoprenoid precursor biosynthesis. This chain is 4-hydroxy-3-methylbut-2-enyl diphosphate reductase 1, found in Mycobacterium tuberculosis (strain CDC 1551 / Oshkosh).